A 535-amino-acid polypeptide reads, in one-letter code: T-complex protein 1 subunit epsilon (535 aa).

The protein belongs to the TCP-1 chaperonin family. As to quaternary structure, heterooligomeric complex of about 850 to 900 kDa that forms two stacked rings, 12 to 16 nm in diameter.

It localises to the cytoplasm. Its function is as follows. Molecular chaperone; assists the folding of proteins upon ATP hydrolysis. Known to play a role, in vitro, in the folding of actin and tubulin. The sequence is that of T-complex protein 1 subunit epsilon from Avena sativa (Oat).